The following is a 250-amino-acid chain: tRNA (guanine-N(1)-)-methyltransferase (250 aa).

Residues Gly116 and 136–141 each bind S-adenosyl-L-methionine; that span reads IGDYVL.

Belongs to the RNA methyltransferase TrmD family. Homodimer.

Its subcellular location is the cytoplasm. It carries out the reaction guanosine(37) in tRNA + S-adenosyl-L-methionine = N(1)-methylguanosine(37) in tRNA + S-adenosyl-L-homocysteine + H(+). Functionally, specifically methylates guanosine-37 in various tRNAs. The sequence is that of tRNA (guanine-N(1)-)-methyltransferase from Stutzerimonas stutzeri (strain A1501) (Pseudomonas stutzeri).